We begin with the raw amino-acid sequence, 83 residues long: Cell division topological specificity factor (83 aa).

This sequence belongs to the MinE family.

Prevents the cell division inhibition by proteins MinC and MinD at internal division sites while permitting inhibition at polar sites. This ensures cell division at the proper site by restricting the formation of a division septum at the midpoint of the long axis of the cell. This Buchnera aphidicola subsp. Schizaphis graminum (strain Sg) protein is Cell division topological specificity factor.